Reading from the N-terminus, the 353-residue chain is Ribosome biogenesis protein BRX1 homolog (353 aa).

A compositionally biased stretch (basic residues) spans 1-10 (MAATKRKRRG). Residues 1-46 (MAATKRKRRGGLAVQAKKLKRDAKDGKLPAKANDVSEEAAEEEKDR) are disordered. The Brix domain occupies 60 to 249 (ERILIFSSRG…LIKIFQGSFG (190 aa)). K160 is covalently cross-linked (Glycyl lysine isopeptide (Lys-Gly) (interchain with G-Cter in SUMO2)). S261 carries the post-translational modification Phosphoserine. Residue K276 is modified to N6-acetyllysine. Glycyl lysine isopeptide (Lys-Gly) (interchain with G-Cter in SUMO2) cross-links involve residues K314 and K322.

Belongs to the BRX1 family.

The protein localises to the nucleus. The protein resides in the nucleolus. Functionally, required for biogenesis of the 60S ribosomal subunit. The chain is Ribosome biogenesis protein BRX1 homolog (BRIX1) from Bos taurus (Bovine).